The following is a 303-amino-acid chain: Probable cell division protein WhiA (303 aa).

A DNA-binding region (H-T-H motif) is located at residues 272–303; the sequence is SIQQVADALEFPITKSGVNHRLRKINKIADDL.

This sequence belongs to the WhiA family.

In terms of biological role, involved in cell division and chromosome segregation. This chain is Probable cell division protein WhiA, found in Streptococcus pyogenes serotype M6 (strain ATCC BAA-946 / MGAS10394).